Here is a 49-residue protein sequence, read N- to C-terminus: Large ribosomal subunit protein bL33B (49 aa).

It belongs to the bacterial ribosomal protein bL33 family.

The chain is Large ribosomal subunit protein bL33B from Lacticaseibacillus paracasei (strain ATCC 334 / BCRC 17002 / CCUG 31169 / CIP 107868 / KCTC 3260 / NRRL B-441) (Lactobacillus paracasei).